A 118-amino-acid polypeptide reads, in one-letter code: SPbeta prophage-derived uncharacterized protein YolB (118 aa).

The polypeptide is SPbeta prophage-derived uncharacterized protein YolB (yolB) (Bacillus subtilis (strain 168)).